A 578-amino-acid polypeptide reads, in one-letter code: 2-hydroxyacyl-CoA lyase 1 (578 aa).

Ser-4 bears the Phosphoserine mark. Glu-60 lines the thiamine diphosphate pocket. N6-succinyllysine is present on residues Lys-351, Lys-358, and Lys-365. The thiamine pyrophosphate binding stretch occupies residues 401–486 (TMDIGRTVLQ…LLVVNNNGIY (86 aa)). 2 residues coordinate Mg(2+): Asp-455 and Asn-482. The Microbody targeting signal signature appears at 576 to 578 (SNM).

The protein belongs to the TPP enzyme family. Homotetramer. Requires Mg(2+) as cofactor. Thiamine diphosphate serves as cofactor. In terms of tissue distribution, widely expressed.

It localises to the peroxisome. It carries out the reaction a 2-hydroxy-3-methyl fatty acyl-CoA = a 2-methyl-branched fatty aldehyde + formyl-CoA. The catalysed reaction is an (R)-2-hydroxy-long-chain-fatty acyl-CoA = a long-chain fatty aldehyde + formyl-CoA. The enzyme catalyses 2-hydroxy-3-methylhexadecanoyl-CoA = 2-methylpentadecanal + formyl-CoA. It catalyses the reaction 2-hydroxyoctadecanoyl-CoA = heptadecanal + formyl-CoA. It carries out the reaction 2-hydroxyphytanoyl-CoA = 2,6,10,14-tetramethylpentadecanal + formyl-CoA. Its pathway is lipid metabolism; fatty acid metabolism. In terms of biological role, peroxisomal 2-OH acyl-CoA lyase involved in the cleavage (C1 removal) reaction in the fatty acid alpha-oxydation in a thiamine pyrophosphate (TPP)-dependent manner. Involved in the degradation of 3-methyl-branched fatty acids like phytanic acid and the shortening of 2-hydroxy long-chain fatty acids. Plays a significant role in the biosynthesis of heptadecanal in the liver. The sequence is that of 2-hydroxyacyl-CoA lyase 1 from Homo sapiens (Human).